The following is a 359-amino-acid chain: Dihydroorotate dehydrogenase (quinone) (359 aa).

FMN is bound by residues Ala-61–Lys-65 and Thr-85. Lys-65 lines the substrate pocket. Asn-110–Phe-114 lines the substrate pocket. Positions 139 and 170 each coordinate FMN. Asn-170 contacts substrate. Ser-173 serves as the catalytic Nucleophile. Residue Asn-175 participates in substrate binding. The FMN site is built by Lys-211 and Ser-239. Substrate is bound at residue Asn-240–Thr-241. Residues Gly-262, Gly-291, and Tyr-312–Thr-313 each bind FMN.

Belongs to the dihydroorotate dehydrogenase family. Type 2 subfamily. In terms of assembly, monomer. The cofactor is FMN.

Its subcellular location is the cell membrane. The catalysed reaction is (S)-dihydroorotate + a quinone = orotate + a quinol. It participates in pyrimidine metabolism; UMP biosynthesis via de novo pathway; orotate from (S)-dihydroorotate (quinone route): step 1/1. In terms of biological role, catalyzes the conversion of dihydroorotate to orotate with quinone as electron acceptor. The chain is Dihydroorotate dehydrogenase (quinone) from Mesorhizobium japonicum (strain LMG 29417 / CECT 9101 / MAFF 303099) (Mesorhizobium loti (strain MAFF 303099)).